A 402-amino-acid chain; its full sequence is Homoserine O-acetyltransferase (402 aa).

Positions 38-359 constitute an AB hydrolase-1 domain; that stretch reads NAVLVCHALT…HGHDAFLVEP (322 aa). Ser-146 serves as the catalytic Nucleophile. Arg-217 is a binding site for substrate. Catalysis depends on residues Asp-319 and His-352. Asp-353 contacts substrate.

This sequence belongs to the AB hydrolase superfamily. MetX family. As to quaternary structure, homodimer.

The protein resides in the cytoplasm. The catalysed reaction is L-homoserine + acetyl-CoA = O-acetyl-L-homoserine + CoA. The protein operates within amino-acid biosynthesis; L-methionine biosynthesis via de novo pathway; O-acetyl-L-homoserine from L-homoserine: step 1/1. Functionally, transfers an acetyl group from acetyl-CoA to L-homoserine, forming acetyl-L-homoserine. The chain is Homoserine O-acetyltransferase from Haloarcula marismortui (strain ATCC 43049 / DSM 3752 / JCM 8966 / VKM B-1809) (Halobacterium marismortui).